Here is a 207-residue protein sequence, read N- to C-terminus: ATP synthase subunit a (207 aa).

A run of 6 helical transmembrane segments spans residues 3–23 (QHVI…TIFA), 62–82 (LIAS…IPGL), 88–108 (NLNT…FEGI), 119–139 (FLGP…LSHL), 158–178 (LISV…VMLI), and 180–200 (LIAV…YIAG).

It belongs to the ATPase A chain family. F-type ATPases have 2 components, CF(1) - the catalytic core - and CF(0) - the membrane proton channel. CF(1) has five subunits: alpha(3), beta(3), gamma(1), delta(1), epsilon(1). CF(0) has three main subunits: a(1), b(2) and c(9-12). The alpha and beta chains form an alternating ring which encloses part of the gamma chain. CF(1) is attached to CF(0) by a central stalk formed by the gamma and epsilon chains, while a peripheral stalk is formed by the delta and b chains.

Its subcellular location is the cell inner membrane. Its function is as follows. Key component of the proton channel; it plays a direct role in the translocation of protons across the membrane. The polypeptide is ATP synthase subunit a (Sulfurihydrogenibium sp. (strain YO3AOP1)).